We begin with the raw amino-acid sequence, 206 residues long: Octanoyltransferase (206 aa).

The region spanning 30 to 206 (PETNDEIWLV…EFVTLLNNSI (177 aa)) is the BPL/LPL catalytic domain. Substrate contacts are provided by residues 69–76 (RGGQVTYH), 137–139 (SLG), and 150–152 (GIA). The active-site Acyl-thioester intermediate is C168.

This sequence belongs to the LipB family.

The protein resides in the cytoplasm. The catalysed reaction is octanoyl-[ACP] + L-lysyl-[protein] = N(6)-octanoyl-L-lysyl-[protein] + holo-[ACP] + H(+). It functions in the pathway protein modification; protein lipoylation via endogenous pathway; protein N(6)-(lipoyl)lysine from octanoyl-[acyl-carrier-protein]: step 1/2. Functionally, catalyzes the transfer of endogenously produced octanoic acid from octanoyl-acyl-carrier-protein onto the lipoyl domains of lipoate-dependent enzymes. Lipoyl-ACP can also act as a substrate although octanoyl-ACP is likely to be the physiological substrate. The chain is Octanoyltransferase from Francisella tularensis subsp. tularensis (strain FSC 198).